A 416-amino-acid chain; its full sequence is 4-hydroxy-3-methylbut-2-en-1-yl diphosphate synthase (flavodoxin) (416 aa).

Residues C304, C307, C350, and E357 each coordinate [4Fe-4S] cluster.

It belongs to the IspG family. [4Fe-4S] cluster serves as cofactor.

It carries out the reaction (2E)-4-hydroxy-3-methylbut-2-enyl diphosphate + oxidized [flavodoxin] + H2O + 2 H(+) = 2-C-methyl-D-erythritol 2,4-cyclic diphosphate + reduced [flavodoxin]. Its pathway is isoprenoid biosynthesis; isopentenyl diphosphate biosynthesis via DXP pathway; isopentenyl diphosphate from 1-deoxy-D-xylulose 5-phosphate: step 5/6. Its function is as follows. Converts 2C-methyl-D-erythritol 2,4-cyclodiphosphate (ME-2,4cPP) into 1-hydroxy-2-methyl-2-(E)-butenyl 4-diphosphate. The polypeptide is 4-hydroxy-3-methylbut-2-en-1-yl diphosphate synthase (flavodoxin) (Rhizobium johnstonii (strain DSM 114642 / LMG 32736 / 3841) (Rhizobium leguminosarum bv. viciae)).